The chain runs to 233 residues: MPDPRPLTPDQTHGRGHAEAAVDWEASRLYRLAQSERRAWTVAWAALAVTALSLIAIATMLPLKTTIPYLIEVEKSSGAASVVTQFEPRDFTPDTLMNQYWLTRYVAARERYDWHTIQHDYDYVRLLSAPAVRHDYETSYEAPDAPDRKYGAGTTLAVKILSAIDHGKGVGTVRFVRTRRDADGQGAAESSIWVATVAFAYDRPRALTQAQRWLNPLGFAVTSYRVDAEAGQP.

A helical transmembrane segment spans residues 42 to 62; sequence VAWAALAVTALSLIAIATMLP.

The protein belongs to the virB8 family.

Its subcellular location is the cell inner membrane. This chain is Type IV secretion system protein PtlE homolog (ptlE), found in Bordetella bronchiseptica (strain ATCC BAA-588 / NCTC 13252 / RB50) (Alcaligenes bronchisepticus).